Consider the following 102-residue polypeptide: Malonate decarboxylase acyl carrier protein (102 aa).

Position 27 is an O-(phosphoribosyl dephospho-coenzyme A)serine (serine 27).

The protein belongs to the MdcC family. Covalently binds the prosthetic group of malonate decarboxylase.

It is found in the cytoplasm. In terms of biological role, subunit of malonate decarboxylase, it is an acyl carrier protein to which acetyl and malonyl thioester residues are bound via a 2'-(5''-phosphoribosyl)-3'-dephospho-CoA prosthetic group and turn over during the catalytic mechanism. In Acinetobacter calcoaceticus, this protein is Malonate decarboxylase acyl carrier protein.